Here is a 558-residue protein sequence, read N- to C-terminus: Glutamine--tRNA ligase (558 aa).

The short motif at 36–46 (PEPNGYLHIGH) is the 'HIGH' region element. Residues 37 to 39 (EPN) and 43 to 49 (HIGHAKS) each bind ATP. Positions 69 and 214 each coordinate L-glutamine. Residues Thr-233, 263 to 264 (RL), and 271 to 273 (LSK) contribute to the ATP site. Positions 270–274 (LLSKR) match the 'KMSKS' region motif.

The protein belongs to the class-I aminoacyl-tRNA synthetase family. Monomer.

It is found in the cytoplasm. The enzyme catalyses tRNA(Gln) + L-glutamine + ATP = L-glutaminyl-tRNA(Gln) + AMP + diphosphate. The sequence is that of Glutamine--tRNA ligase from Bradyrhizobium diazoefficiens (strain JCM 10833 / BCRC 13528 / IAM 13628 / NBRC 14792 / USDA 110).